The sequence spans 411 residues: MVRWLTAGESHGPALTGIVEGLPAGIPVTTQDVQDALARRRLGYGRGARMKFEQDAVTILGGVRHGRTLGSPVAIQVGNTEWPKWEKVMAADPVPAEELDGLARNAALTRPRPGHADLTGMQKYGFDEARPLLERASARETAARVALGTVARAFLGELGVRIVSHTVAFGEAALPESHPFPVPEDEARLDADPVRCLDPQTSAAMVAEVDDAHRAGETLGGVVEVLVYSVPIGLGSHVHWDRRLDARLAGALMGIQAIKGVQVGDGFATAARRGSAAHDGIARGADGRPRRTSDRAGGIEAGMSTGGLLRVSAAMKPIATVPRALPTVDVATGVETTAHHQRSDVAAVPAAGIVAEAMVALVLADAMLEKFGGDSVAETRRNLEAFRAAVPALPEPGADVVEDGPMGDPLP.

Residues arginine 40 and arginine 46 each coordinate NADP(+). Residues 135–137 (RAS) and 256–257 (QA) each bind FMN. Residues 278–299 (HDGIARGADGRPRRTSDRAGGI) form a disordered region. Residues 285 to 294 (ADGRPRRTSD) show a composition bias toward basic and acidic residues. Residues alanine 301, 316 to 320 (KPIAT), and arginine 342 contribute to the FMN site.

It belongs to the chorismate synthase family. Homotetramer. The cofactor is FMNH2.

The catalysed reaction is 5-O-(1-carboxyvinyl)-3-phosphoshikimate = chorismate + phosphate. The protein operates within metabolic intermediate biosynthesis; chorismate biosynthesis; chorismate from D-erythrose 4-phosphate and phosphoenolpyruvate: step 7/7. Catalyzes the anti-1,4-elimination of the C-3 phosphate and the C-6 proR hydrogen from 5-enolpyruvylshikimate-3-phosphate (EPSP) to yield chorismate, which is the branch point compound that serves as the starting substrate for the three terminal pathways of aromatic amino acid biosynthesis. This reaction introduces a second double bond into the aromatic ring system. This is Chorismate synthase from Micrococcus luteus (strain ATCC 4698 / DSM 20030 / JCM 1464 / CCM 169 / CCUG 5858 / IAM 1056 / NBRC 3333 / NCIMB 9278 / NCTC 2665 / VKM Ac-2230) (Micrococcus lysodeikticus).